The chain runs to 1211 residues: Homeodomain-interacting protein kinase 1 (1211 aa).

A Glycyl lysine isopeptide (Lys-Gly) (interchain with G-Cter in SUMO); alternate cross-link involves residue Lys-25. Lys-25 participates in a covalent cross-link: Glycyl lysine isopeptide (Lys-Gly) (interchain with G-Cter in SUMO2); alternate. Glycyl lysine isopeptide (Lys-Gly) (interchain with G-Cter in SUMO2) cross-links involve residues Lys-120 and Lys-124. Residues 190–518 (YEVLEFLGRG…PLKTLNHQFV (329 aa)) form the Protein kinase domain. Residues 196–204 (LGRGTFGQV) and Lys-219 contribute to the ATP site. Asp-315 functions as the Proton acceptor in the catalytic mechanism. The interval 835-856 (QQQSSSLPSRKNKQSAPVSSTS) is disordered. The Nuclear localization signal 1 (NLS1) signature appears at 844–847 (RKNK). Phosphoserine is present on Ser-872. An interaction with TP53 region spans residues 885-1094 (PVQDQHQPII…FQHGSPLHST (210 aa)). The tract at residues 891 to 998 (QPIIIPDTPS…PLKTQLGDCT (108 aa)) is required for localization to nuclear speckles. Residues 902–926 (PVSVITIRSDTDEEEDNKFKPSSSS) are SUMO interaction motifs (SIM); required for nuclear localization and kinase activity. Lys-991 participates in a covalent cross-link: Glycyl lysine isopeptide (Lys-Gly) (interchain with G-Cter in SUMO2). Disordered regions lie at residues 1002–1023 (QASG…GQSS), 1047–1070 (LSQN…APRR), and 1085–1105 (FQHG…APAH). 2 stretches are compositionally biased toward low complexity: residues 1048–1064 (SQNQ…ERSS) and 1096–1105 (HPHLAPAPAH). At Ser-1201 the chain carries Phosphoserine. Lys-1204 is covalently cross-linked (Glycyl lysine isopeptide (Lys-Gly) (interchain with G-Cter in SUMO)).

The protein belongs to the protein kinase superfamily. CMGC Ser/Thr protein kinase family. HIPK subfamily. As to quaternary structure, interacts with Nkx1-2, Nkx2-5, MYB, PARK7, DAXX and p53/TP53. Part of a cytoplasmic complex made of HIPK1, DAB2IP and MAP3K5 in response to TNF. This complex formation promotes MAP3K5-JNK activation and subsequent apoptosis. Post-translationally, phosphorylated and activated by JNK1. Autophosphorylated. Sumoylated. When conjugated it is directed to nuclear speckles. SENP1-mediated desumoylation is mediated by TNF in response to stress stimuli, triggering transient translocation from nucleus to cytoplasm.

The protein resides in the nucleus. The protein localises to the cytoplasm. It localises to the nucleus speckle. It catalyses the reaction L-seryl-[protein] + ATP = O-phospho-L-seryl-[protein] + ADP + H(+). It carries out the reaction L-threonyl-[protein] + ATP = O-phospho-L-threonyl-[protein] + ADP + H(+). Functionally, serine/threonine-protein kinase involved in transcription regulation and TNF-mediated cellular apoptosis. Plays a role as a corepressor for homeodomain transcription factors. Phosphorylates DAXX and MYB. Phosphorylates DAXX in response to stress, and mediates its translocation from the nucleus to the cytoplasm. Inactivates MYB transcription factor activity by phosphorylation. Prevents MAP3K5-JNK activation in the absence of TNF. TNF triggers its translocation to the cytoplasm in response to stress stimuli, thus activating nuclear MAP3K5-JNK by derepression and promoting apoptosis. May be involved in anti-oxidative stress responses. Involved in the regulation of eye size, lens formation and retinal lamination during late embryogenesis. Promotes angiogenesis and to be involved in erythroid differentiation. May be involved in malignant squamous cell tumor formation. Phosphorylates PAGE4 at 'Thr-51' which is critical for the ability of PAGE4 to potentiate the transcriptional activator activity of JUN. This is Homeodomain-interacting protein kinase 1 from Rattus norvegicus (Rat).